The primary structure comprises 507 residues: Ribonuclease Y (507 aa).

The chain crosses the membrane as a helical span at residues 1-21 (MLWYIVAGAGGLLIGYLIASY). The KH domain maps to 197–282 (TVSTVSLPSD…EMYEKAKQEV (86 aa)). Residues 323-416 (VLNHSIEVAL…VAAADALSAA (94 aa)) enclose the HD domain.

The protein belongs to the RNase Y family.

The protein resides in the cell membrane. Functionally, endoribonuclease that initiates mRNA decay. The protein is Ribonuclease Y of Thermotoga petrophila (strain ATCC BAA-488 / DSM 13995 / JCM 10881 / RKU-1).